A 550-amino-acid polypeptide reads, in one-letter code: Hydroxylamine reductase (550 aa).

Residues Cys-3, Cys-6, Cys-18, and Cys-25 each coordinate [2Fe-2S] cluster. His-249, Glu-273, Cys-317, Cys-405, Cys-433, Cys-458, Glu-492, and Lys-494 together coordinate hybrid [4Fe-2O-2S] cluster. At Cys-405 the chain carries Cysteine persulfide.

Belongs to the HCP family. [2Fe-2S] cluster is required as a cofactor. Requires hybrid [4Fe-2O-2S] cluster as cofactor.

The protein resides in the cytoplasm. The catalysed reaction is A + NH4(+) + H2O = hydroxylamine + AH2 + H(+). Functionally, catalyzes the reduction of hydroxylamine to form NH(3) and H(2)O. The chain is Hydroxylamine reductase from Pectobacterium atrosepticum (strain SCRI 1043 / ATCC BAA-672) (Erwinia carotovora subsp. atroseptica).